The chain runs to 362 residues: Ribosome-binding ATPase YchF (362 aa).

Positions 3-255 (FKCGIIGLPN…MSDEEKKSFM (253 aa)) constitute an OBG-type G domain. Residue 12 to 17 (NVGKST) participates in ATP binding. Positions 16 and 36 each coordinate Mg(2+). Residues 277–360 (NLITFFTVGD…QDGDIIHFLF (84 aa)) enclose the TGS domain.

This sequence belongs to the TRAFAC class OBG-HflX-like GTPase superfamily. OBG GTPase family. YchF/OLA1 subfamily. Mg(2+) is required as a cofactor.

In terms of biological role, ATPase that binds to both the 70S ribosome and the 50S ribosomal subunit in a nucleotide-independent manner. This chain is Ribosome-binding ATPase YchF, found in Buchnera aphidicola subsp. Acyrthosiphon pisum (strain APS) (Acyrthosiphon pisum symbiotic bacterium).